The sequence spans 548 residues: MSDARVPRIPAALSAPSLNRGVGFTHAQRRRLGLTGRLPSAVLTLDQQAERVWHQLQSLATELGRNLLLEQLHYRHEVLYFKVLADHLPELMPVVYTPTVGEAIQRFSDEYRGQRGLFLSIDEPDEIEEAFNTLGLGPEDVDLIVCTDAEAILGIGDWGVGGIQIAVGKLALYTAGGGVDPRRCLAVSLDVGTDNEQLLADPFYLGNRHARRRGREYDEFVSRYIETAQRLFPRAILHFEDFGPANARKILDTYGTDYCVFNDDMQGTGAVVLAAVYSGLKVTGIPLRDQTIVVFGAGTAGMGIADQIRDAMVADGATLEQAVSQIWPIDRPGLLFDDMDDLRDFQVPYAKNRHQLGVAVGDRVGLSDAIKIASPTILLGCSTVYGAFTKEVVEAMTASCKHPMIFPLSNPTSRMEAIPADVLAWSNGRALLATGSPVAPVEFDETTYVIGQANNVLAFPGIGLGVIVAGARLITRRMLHAAAKAIAHQANPTNPGDSLLPDVQNLRAISTTVAEAVYRAAVQDGVASRTHDDVRQAIVDTMWLPAYD.

Y96 acts as the Proton donor in catalysis. K169 (proton acceptor) is an active-site residue. The a divalent metal cation site is built by E240, D241, and D264. Residues 297–300 (AGTA), N410, and N455 each bind NAD(+).

This sequence belongs to the malic enzymes family. The cofactor is Mg(2+). It depends on Mn(2+) as a cofactor.

The catalysed reaction is (S)-malate + NAD(+) = pyruvate + CO2 + NADH. The enzyme catalyses oxaloacetate + H(+) = pyruvate + CO2. This Mycobacterium tuberculosis (strain CDC 1551 / Oshkosh) protein is Putative malate oxidoreductase [NAD] (mez).